The chain runs to 287 residues: Orotidine 5'-phosphate decarboxylase (287 aa).

Lys-97 functions as the Proton donor in the catalytic mechanism.

It belongs to the OMP decarboxylase family. Type 2 subfamily.

It catalyses the reaction orotidine 5'-phosphate + H(+) = UMP + CO2. It functions in the pathway pyrimidine metabolism; UMP biosynthesis via de novo pathway; UMP from orotate: step 2/2. The chain is Orotidine 5'-phosphate decarboxylase (pyrF) from Clostridium perfringens (strain 13 / Type A).